A 125-amino-acid chain; its full sequence is Nascent polypeptide-associated complex protein (125 aa).

Residues 9-76 (PRMMKQMQKM…SKNTSKTAEK (68 aa)) enclose the NAC-A/B domain.

It belongs to the NAC-alpha family. As to quaternary structure, homodimer. Interacts with the ribosome. Binds ribosomal RNA.

Its function is as follows. Contacts the emerging nascent chain on the ribosome. The protein is Nascent polypeptide-associated complex protein of Methanococcus vannielii (strain ATCC 35089 / DSM 1224 / JCM 13029 / OCM 148 / SB).